Reading from the N-terminus, the 323-residue chain is Protoheme IX farnesyltransferase (323 aa).

8 consecutive transmembrane segments (helical) span residues 50–70, 97–117, 118–138, 150–170, 184–204, 231–248, 252–274, and 293–313; these read IVLI…ANTF, NRDA…WLWL, LCDS…YIFV, NIVW…AVIV, AIVL…ALAM, IVWY…LIPA, IYAA…LHLG, and YLAV…ETIG.

This sequence belongs to the UbiA prenyltransferase family. Protoheme IX farnesyltransferase subfamily.

The protein localises to the cell membrane. The catalysed reaction is heme b + (2E,6E)-farnesyl diphosphate + H2O = Fe(II)-heme o + diphosphate. The protein operates within porphyrin-containing compound metabolism; heme O biosynthesis; heme O from protoheme: step 1/1. In terms of biological role, converts heme B (protoheme IX) to heme O by substitution of the vinyl group on carbon 2 of heme B porphyrin ring with a hydroxyethyl farnesyl side group. In Corynebacterium glutamicum (strain R), this protein is Protoheme IX farnesyltransferase.